The chain runs to 250 residues: DNA repair protein RecO (250 aa).

Belongs to the RecO family.

Involved in DNA repair and RecF pathway recombination. The polypeptide is DNA repair protein RecO (Rhodospirillum centenum (strain ATCC 51521 / SW)).